A 90-amino-acid polypeptide reads, in one-letter code: Probable Fe(2+)-trafficking protein (90 aa).

Belongs to the Fe(2+)-trafficking protein family. Monomer.

Could be a mediator in iron transactions between iron acquisition and iron-requiring processes, such as synthesis and/or repair of Fe-S clusters in biosynthetic enzymes. This is Probable Fe(2+)-trafficking protein from Pectobacterium carotovorum subsp. carotovorum (strain PC1).